The primary structure comprises 173 residues: Alpha-crystallin A chain (173 aa).

Position 1 is an N-acetylmethionine (Met1). The sHSP domain maps to 52–162 (LFRTVLESGI…SHNERPIPVS (111 aa)). Residues His100, Glu102, His107, and His154 each contribute to the Zn(2+) site. The disordered stretch occupies residues 144–173 (PKVQSNTDPSHNERPIPVSREEKPTSAPPS). Residues 153 to 167 (SHNERPIPVSREEKP) show a composition bias toward basic and acidic residues. O-linked (GlcNAc) serine glycosylation is present at Ser162.

Belongs to the small heat shock protein (HSP20) family. Heteropolymer composed of three CRYAA and one CRYAB subunits. Inter-subunit bridging via zinc ions enhances stability, which is crucial as there is no protein turn over in the lens. Can also form homodimers and homotetramers (dimers of dimers) which serve as the building blocks of homooligomers. Within homooligomers, the zinc-binding motif is created from residues of 3 different molecules. His-100 and Glu-102 from one molecule are ligands of the zinc ion, and His-107 and His-154 residues from additional molecules complete the site with tetrahedral coordination geometry.

It localises to the cytoplasm. The protein resides in the nucleus. Its function is as follows. Contributes to the transparency and refractive index of the lens. May act as a chaperone, preventing aggregation of various proteins under a wide range of stress conditions. This is Alpha-crystallin A chain (CRYAA) from Tupinambis teguixin (Golden tegu).